A 480-amino-acid chain; its full sequence is Glutamyl-tRNA(Gln) amidotransferase subunit A (480 aa).

Residues K74 and S149 each act as charge relay system in the active site. Residue S173 is the Acyl-ester intermediate of the active site.

This sequence belongs to the amidase family. GatA subfamily. In terms of assembly, heterotrimer of A, B and C subunits.

The catalysed reaction is L-glutamyl-tRNA(Gln) + L-glutamine + ATP + H2O = L-glutaminyl-tRNA(Gln) + L-glutamate + ADP + phosphate + H(+). In terms of biological role, allows the formation of correctly charged Gln-tRNA(Gln) through the transamidation of misacylated Glu-tRNA(Gln) in organisms which lack glutaminyl-tRNA synthetase. The reaction takes place in the presence of glutamine and ATP through an activated gamma-phospho-Glu-tRNA(Gln). The polypeptide is Glutamyl-tRNA(Gln) amidotransferase subunit A (Prochlorococcus marinus (strain MIT 9312)).